Consider the following 176-residue polypeptide: RNA pyrophosphohydrolase (176 aa).

Positions 6–149 (GYRPNVGIII…KRNVYEMALT (144 aa)) constitute a Nudix hydrolase domain. Residues 38–59 (GGIKPGESPEAAMYRELMEEVG) carry the Nudix box motif.

The protein belongs to the Nudix hydrolase family. RppH subfamily. It depends on a divalent metal cation as a cofactor.

Functionally, accelerates the degradation of transcripts by removing pyrophosphate from the 5'-end of triphosphorylated RNA, leading to a more labile monophosphorylated state that can stimulate subsequent ribonuclease cleavage. The chain is RNA pyrophosphohydrolase from Laribacter hongkongensis (strain HLHK9).